The following is an 88-amino-acid chain: Putative regulatory protein AM1_5498 (88 aa).

Belongs to the RemA family.

The chain is Putative regulatory protein AM1_5498 from Acaryochloris marina (strain MBIC 11017).